Here is a 465-residue protein sequence, read N- to C-terminus: UDP-N-acetylmuramate--L-alanine ligase (465 aa).

112–118 (GTHGKTT) serves as a coordination point for ATP.

Belongs to the MurCDEF family.

It is found in the cytoplasm. It catalyses the reaction UDP-N-acetyl-alpha-D-muramate + L-alanine + ATP = UDP-N-acetyl-alpha-D-muramoyl-L-alanine + ADP + phosphate + H(+). It functions in the pathway cell wall biogenesis; peptidoglycan biosynthesis. Functionally, cell wall formation. This is UDP-N-acetylmuramate--L-alanine ligase from Burkholderia mallei (strain NCTC 10247).